The primary structure comprises 217 residues: Fucoxanthin-chlorophyll a-c binding protein B, chloroplastic (217 aa).

The transit peptide at 1–39 directs the protein to the chloroplast; sequence MKSAVMAVACAAAPGFRGPSAFNGAALTTSAKACSAMKM. Transmembrane regions (helical) follow at residues 81–101, 122–142, and 183–203; these read IAML…PGML, IPPA…LAVM, and GRAA…NNKP.

It belongs to the fucoxanthin chlorophyll protein family. As to quaternary structure, the LHC complex of chromophytic algae is composed of fucoxanthin, chlorophyll A and C bound non-covalently by fucoxanthin chlorophyll proteins (FCPs). The ratio of pigments in this LHC is; fucoxanthin: chlorophyll C: chlorophyll A; (0.6-1): (0.1-0.3): (1).

The protein resides in the plastid. Its subcellular location is the chloroplast thylakoid membrane. The light-harvesting complex (LHC) functions as a light receptor, it captures and delivers excitation energy to photosystems with which it is closely associated. Energy is transferred from the carotenoid and chlorophyll C (or B) to chlorophyll A and the photosynthetic reaction centers where it is used to synthesize ATP and reducing power. In Macrocystis pyrifera (Giant kelp), this protein is Fucoxanthin-chlorophyll a-c binding protein B, chloroplastic (FCPB).